Reading from the N-terminus, the 592-residue chain is Methionine--tRNA ligase (592 aa).

Positions 12–22 (PYANGPFHVGH) match the 'HIGH' region motif. Residues cysteine 144, cysteine 147, cysteine 157, and cysteine 160 each contribute to the Zn(2+) site. The short motif at 342 to 346 (KMSTS) is the 'KMSKS' region element. Threonine 345 is an ATP binding site.

This sequence belongs to the class-I aminoacyl-tRNA synthetase family. MetG type 1 subfamily. As to quaternary structure, monomer. The cofactor is Zn(2+).

Its subcellular location is the cytoplasm. It carries out the reaction tRNA(Met) + L-methionine + ATP = L-methionyl-tRNA(Met) + AMP + diphosphate. In terms of biological role, is required not only for elongation of protein synthesis but also for the initiation of all mRNA translation through initiator tRNA(fMet) aminoacylation. This Roseiflexus sp. (strain RS-1) protein is Methionine--tRNA ligase.